The chain runs to 191 residues: Adenine phosphoribosyltransferase (191 aa).

Belongs to the purine/pyrimidine phosphoribosyltransferase family. Homodimer.

It localises to the cytoplasm. It catalyses the reaction AMP + diphosphate = 5-phospho-alpha-D-ribose 1-diphosphate + adenine. It participates in purine metabolism; AMP biosynthesis via salvage pathway; AMP from adenine: step 1/1. Functionally, catalyzes a salvage reaction resulting in the formation of AMP, that is energically less costly than de novo synthesis. The chain is Adenine phosphoribosyltransferase from Nocardia farcinica (strain IFM 10152).